Here is a 316-residue protein sequence, read N- to C-terminus: Ribosomal RNA small subunit methyltransferase H (316 aa).

Residues 35–37 (SGH), Asp-55, Phe-84, Asp-105, and Gln-112 contribute to the S-adenosyl-L-methionine site.

It belongs to the methyltransferase superfamily. RsmH family.

The protein resides in the cytoplasm. It carries out the reaction cytidine(1402) in 16S rRNA + S-adenosyl-L-methionine = N(4)-methylcytidine(1402) in 16S rRNA + S-adenosyl-L-homocysteine + H(+). Its function is as follows. Specifically methylates the N4 position of cytidine in position 1402 (C1402) of 16S rRNA. The polypeptide is Ribosomal RNA small subunit methyltransferase H (Streptococcus dysgalactiae subsp. equisimilis (strain GGS_124)).